The sequence spans 415 residues: GPI mannosyltransferase 1 (415 aa).

9 consecutive transmembrane segments (helical) span residues 8-28 (PSLV…YGAW), 82-102 (FFSF…WLIA), 134-154 (TRGS…WAVL), 158-178 (ITLA…PFVY), 222-242 (LLLT…MYIL), 284-304 (FESL…PIVL), 329-349 (SQYF…SSLM), 354-374 (LGIT…QQGY), and 387-407 (GLFL…GIII).

The protein belongs to the PIGM family.

It is found in the endoplasmic reticulum membrane. Its pathway is glycolipid biosynthesis; glycosylphosphatidylinositol-anchor biosynthesis. In terms of biological role, mannosyltransferase involved in glycosylphosphatidylinositol-anchor biosynthesis. Transfers the first alpha-1,4-mannose to GlcN-acyl-PI during GPI precursor assembly. Required for cell wall integrity. In Aspergillus oryzae (strain ATCC 42149 / RIB 40) (Yellow koji mold), this protein is GPI mannosyltransferase 1 (gpi14).